Consider the following 282-residue polypeptide: Pantothenate synthetase (282 aa).

30–37 (MGYFHEGH) lines the ATP pocket. His-37 acts as the Proton donor in catalysis. Gln-61 contacts (R)-pantoate. Gln-61 is a binding site for beta-alanine. 147 to 150 (GQKD) provides a ligand contact to ATP. Gln-153 contributes to the (R)-pantoate binding site. Residues Val-176 and 184–187 (LSSR) each bind ATP.

Belongs to the pantothenate synthetase family. Homodimer.

The protein resides in the cytoplasm. It catalyses the reaction (R)-pantoate + beta-alanine + ATP = (R)-pantothenate + AMP + diphosphate + H(+). Its pathway is cofactor biosynthesis; (R)-pantothenate biosynthesis; (R)-pantothenate from (R)-pantoate and beta-alanine: step 1/1. Functionally, catalyzes the condensation of pantoate with beta-alanine in an ATP-dependent reaction via a pantoyl-adenylate intermediate. This chain is Pantothenate synthetase, found in Maridesulfovibrio salexigens (strain ATCC 14822 / DSM 2638 / NCIMB 8403 / VKM B-1763) (Desulfovibrio salexigens).